The primary structure comprises 803 residues: Bifunctional enzyme MurC/Ddl (803 aa).

Residues 1–446 (MMKSLFYHFI…GEKLRDFEPQ (446 aa)) are UDP-N-acetylmuramate--alanine ligase. Residues 111–117 (GSHGKTT) and 600–655 (VEAF…CKEI) each bind ATP. Residues 447–803 (KLHLGIICGG…SFVDQAFAIQ (357 aa)) are D-alanine--D-alanine ligase. An ATP-grasp domain is found at 567–778 (KRFMSDLGIP…YEQIVHQLVI (212 aa)). Mg(2+)-binding residues include D732, E745, and N747.

In the N-terminal section; belongs to the MurCDEF family. The protein in the C-terminal section; belongs to the D-alanine--D-alanine ligase family. Mg(2+) is required as a cofactor. The cofactor is Mn(2+).

It is found in the cytoplasm. The enzyme catalyses UDP-N-acetyl-alpha-D-muramate + L-alanine + ATP = UDP-N-acetyl-alpha-D-muramoyl-L-alanine + ADP + phosphate + H(+). It carries out the reaction 2 D-alanine + ATP = D-alanyl-D-alanine + ADP + phosphate + H(+). The protein operates within cell wall biogenesis; peptidoglycan biosynthesis. In terms of biological role, cell wall formation. The chain is Bifunctional enzyme MurC/Ddl (murC/ddl) from Chlamydia trachomatis serovar D (strain ATCC VR-885 / DSM 19411 / UW-3/Cx).